The sequence spans 245 residues: tRNA (guanine-N(1)-)-methyltransferase (245 aa).

S-adenosyl-L-methionine contacts are provided by residues G114 and 134–139; that span reads IGDYIL.

This sequence belongs to the RNA methyltransferase TrmD family. In terms of assembly, homodimer.

It localises to the cytoplasm. It catalyses the reaction guanosine(37) in tRNA + S-adenosyl-L-methionine = N(1)-methylguanosine(37) in tRNA + S-adenosyl-L-homocysteine + H(+). Its function is as follows. Specifically methylates guanosine-37 in various tRNAs. In Listeria monocytogenes serotype 4b (strain CLIP80459), this protein is tRNA (guanine-N(1)-)-methyltransferase.